The following is a 2274-amino-acid chain: Adenomatous polyposis coli protein 2 (2274 aa).

Residues 5–59 (MASYEQLVRQVEALKAENTHLRQELRDNSSHLSKLETETSGMKEVLKHLQGKLEQ) adopt a coiled-coil conformation. Disordered regions lie at residues 97-120 (GPEPAARTPEGSPVHGSGPSKDSF) and 248-269 (VEEEQEAEVPTHPEDGTPQPGN). 6 ARM repeats span residues 301-341 (PESC…GAKD), 472-511 (ANKATLCARRGCMEAIVAQLGSESEELHQVVSSILRNLSW), 515-555 (INSK…NLSA), 557-602 (STEN…NVSS), 608-647 (EDYRQVLRDHNCLQTLLQHLTSHSLTIVSNACGTLWNLSA), and 650-689 (PRDQELLWDLGAVGMLRNLVHSKHKMIAMGSAAALRNLLA). Residues 832 to 856 (AAKAKAKLALAVARIDRLVEDISAL) adopt a coiled-coil conformation. 3 disordered regions span residues 859–901 (SSDD…GSRA), 1061–1143 (CSSL…NCVQ), and 1165–1216 (SIAS…TSQF). A compositionally biased stretch (low complexity) spans 861-870 (DDSFSLSSGD). Repeat unit 1 spans residues 1049-1068 (LVAQDGPMSLSRCSSLSSLS). Residues 1049–1565 (LVAQDGPMSL…SLTSSASSLS (517 aa)) form a 5 X 20 AA approximate repeat of F-X-V-E-X-T-P-X-C-F-S-R-X-S-S-L-S-S-L-S region. The interaction with CTNNB1 stretch occupies residues 1049-1565 (LVAQDGPMSL…SLTSSASSLS (517 aa)). A compositionally biased stretch (polar residues) spans 1077–1086 (QAENLDSDSS). The span at 1092–1103 (EAGPGEAELGRA) shows a compositional bias: low complexity. The span at 1133–1143 (TPSSSSENCVQ) shows a compositional bias: polar residues. The stretch at 1140-1159 (NCVQETPLVLSRCSSVSSLG) is repeat 2. Residues 1250–1269 (FTVEKPDENFSCASSLSALA) form repeat 3. 6 disordered regions span residues 1290 to 1323 (ERAVGGGGHRRRDEAASRLDGPAPAGSRARSATD), 1368 to 1480 (RGDD…LQSL), 1493 to 1631 (FYDS…DIRP), 1699 to 2003 (STLQ…RGRP), 2022 to 2122 (PRQP…IKDE), and 2135 to 2274 (TALP…SLLE). Residues 1374–1397 (TDSAEGTPVNFSSAASLSDETLQG) show a composition bias toward polar residues. Residues 1375–1394 (DSAEGTPVNFSSAASLSDET) form repeat 4. A compositionally biased stretch (basic and acidic residues) spans 1399–1411 (SRDKPAGPGDRQK). A compositionally biased stretch (polar residues) spans 1455 to 1470 (RPQSARSNRDSSCQTR). Basic and acidic residues predominate over residues 1517–1529 (LKREKPAGRKETP). The stretch at 1546 to 1565 (LIVDETPPCYSLTSSASSLS) is repeat 5. Residues 1556–1574 (SLTSSASSLSEPEAPEQPA) show a composition bias toward low complexity. A phosphoserine mark is found at S1563 and S1565. Over residues 1608–1624 (PRRRTQVPGSRRRKPRA) the composition is skewed to basic residues. Composition is skewed to low complexity over residues 1780–1795 (SGPCTTPKKTGTSGTT) and 1839–1868 (LAKTPSSSSSQTSPASQPLPRRSPLATPTG). A required for localization to microtubules and function in microtubule stabilization region spans residues 1792–1871 (SGTTQPETVT…PLATPTGGPL (80 aa)). Phosphoserine is present on S1861. Positions 1910-1921 (RVPPPLARPSPE) are enriched in pro residues. Composition is skewed to low complexity over residues 1945–1955 (RMASARSSGSE) and 1983–1997 (LSSADSTASTSQAAS). The segment at 2037–2114 (GLAPLAPRRT…PLPRVAPPGT (78 aa)) is interaction with MAPRE1 and MAPRE3. Polar residues predominate over residues 2165–2179 (DVATSKTNSSTSPSL).

It belongs to the adenomatous polyposis coli (APC) family. In terms of assembly, interacts with PSRC1. Interacts with MAPRE3. Interacts with APC, CTNNB1, TP53BP2, MAPRE1 and possibly with AXIN2. In terms of tissue distribution, expressed in brain and other neural tissues.

The protein localises to the cytoplasm. It is found in the cytoskeleton. The protein resides in the golgi apparatus. It localises to the perinuclear region. Functionally, stabilizes microtubules and may regulate actin fiber dynamics through the activation of Rho family GTPases. May also function in Wnt signaling by promoting the rapid degradation of CTNNB1. This is Adenomatous polyposis coli protein 2 (Apc2) from Mus musculus (Mouse).